The sequence spans 94 residues: Trp operon repressor homolog (94 aa).

Residues 58-81 (QREIAEKYGVSIAQITRGSNALKG) mediate DNA binding.

Belongs to the TrpR family. In terms of assembly, homodimer.

It is found in the cytoplasm. Functionally, this protein is an aporepressor. When complexed with L-tryptophan it binds the operator region of the trp operon and prevents the initiation of transcription. The protein is Trp operon repressor homolog of Chlamydia trachomatis serovar A (strain ATCC VR-571B / DSM 19440 / HAR-13).